Here is a 658-residue protein sequence, read N- to C-terminus: Glycogen debranching enzyme (658 aa).

The active-site Nucleophile is the Asp336. Catalysis depends on Glu371, which acts as the Proton donor.

This sequence belongs to the glycosyl hydrolase 13 family.

It catalyses the reaction Hydrolysis of (1-&gt;6)-alpha-D-glucosidic linkages to branches with degrees of polymerization of three or four glucose residues in limit dextrin.. Its pathway is glycan degradation; glycogen degradation. Removes maltotriose and maltotetraose chains that are attached by 1,6-alpha-linkage to the limit dextrin main chain, generating a debranched limit dextrin. The chain is Glycogen debranching enzyme from Klebsiella pneumoniae (strain 342).